A 769-amino-acid chain; its full sequence is MMAKPNGKIQFKNLQSHGVLADPDFPKRTWKLLKTAMRQIHQQNASNLSFEELYRNGYNMVLQKHGDLLYNNLKKMVDKHLKAVAKTVSESIDEKFLLELNSSWINHKTSMLMIRDILMYMDRNYVKQNNLSSVFDLGLYLFRDNVAHCSTIKDRLLNTLLSMVQKEREGEVIDRILIKNIVQMLIDLGVNSKNVYIEDFEKPLLLKTSSHYQAQSQTLIQTCSCPDYMKKVEICLKEELERVSHYLDSSSEPKLKEVCEKQLISNHMRTLIDMENSGLISMLKDDKIEDLKRMYNLFSRVSDGLNLMKDVISSYVKEIGRGIVMDEEKTKESGTYFQSLLDLKDKYDNLLQNALYNDKQFIHSIQQAFEYFINLNPKSPEYISLFIDEKLKKGLKGVSEEEVDIILDKILMLFRLIQEKDVFEKYYKQHLAKRLLLGRSISDDAERNMIAKLKTECGYQFTSKLEGMFTDMRLSQDTMSGFKTYIQNLKKALPIDLNVHVLTTGFWPTQNTANCNLPREILLCCEAFKSYYLSNHNGRLLLWQTNMGTAEIKANFPSKSHELQVSSYQMVILLLFNDQSKLTFKEIADQTGIPTIDLKRNLLALTNPKNKILDRELPSTTSSTTTTTTTATSSSTSTSPSSSSSSISTPTPSKSIDESDVFAFNTKFKSKLFRVKVMAVVQKETPVEEKETRDKVDEDRKHQIEASIVRIMKARKTLEHSNLVSEVIKQLQSRFVPNPVIVKKRIESLIEREYLERSKQDRKIYNYMA.

Positions 614–655 (DRELPSTTSSTTTTTTTATSSSTSTSPSSSSSSISTPTPSKS) are disordered. Positions 618–653 (PSTTSSTTTTTTTATSSSTSTSPSSSSSSISTPTPS) are enriched in low complexity. In terms of domain architecture, Cullin neddylation spans 699 to 761 (DRKHQIEASI…REYLERSKQD (63 aa)). A Glycyl lysine isopeptide (Lys-Gly) (interchain with G-Cter in NEDD8) cross-link involves residue Lys-713.

This sequence belongs to the cullin family. In terms of processing, neddylated. Deneddylated via its interaction with the COP9 signalosome (CSN) complex.

The protein resides in the nucleus. Its pathway is protein modification; protein ubiquitination. Its function is as follows. Probable core component of cullin-based SCF-like E3 ubiquitin-protein ligase complexes which mediate the ubiquitination and subsequent proteasomal degradation of target proteins. The E3 ubiquitin-protein ligase activity of the complex is dependent on the neddylation of the cullin subunit. This chain is Cullin-3 (culC), found in Dictyostelium discoideum (Social amoeba).